Reading from the N-terminus, the 114-residue chain is Biofilm growth-associated repressor (114 aa).

Residues 17-111 (DMEKRANEVA…ALYTIFCAQE (95 aa)) form the HTH arsR-type domain. The segment at residues 51 to 74 (VGELEQQIGIGQPTLSQQLGVLRE) is a DNA-binding region (H-T-H motif).

In terms of biological role, represses an operon that comprises itself, XF_0764, XF_0765, XF_0766 and blh. Binds to a palindromic AT-rich sequence spanning the -10 region of the blh promoter and blocks transcription of the operon. The protein is Biofilm growth-associated repressor (bigR) of Xylella fastidiosa (strain 9a5c).